A 256-amino-acid chain; its full sequence is uncharacterized protein (256 aa).

The 56-residue stretch at 7–62 (PAERQKTLLNLISKQSVISINNLVNILGVSHMTVRRDIQKLEEDGKVISVSGGVQL) folds into the HTH deoR-type domain. The segment at residues 24-43 (ISINNLVNILGVSHMTVRRD) is a DNA-binding region (H-T-H motif).

This is an uncharacterized protein from Haemophilus influenzae (strain ATCC 51907 / DSM 11121 / KW20 / Rd).